A 156-amino-acid polypeptide reads, in one-letter code: Ribosomal RNA large subunit methyltransferase H (156 aa).

Leu72 and Gly104 together coordinate S-adenosyl-L-methionine.

This sequence belongs to the RNA methyltransferase RlmH family. In terms of assembly, homodimer.

It is found in the cytoplasm. It carries out the reaction pseudouridine(1915) in 23S rRNA + S-adenosyl-L-methionine = N(3)-methylpseudouridine(1915) in 23S rRNA + S-adenosyl-L-homocysteine + H(+). Its function is as follows. Specifically methylates the pseudouridine at position 1915 (m3Psi1915) in 23S rRNA. This Maricaulis maris (strain MCS10) (Caulobacter maris) protein is Ribosomal RNA large subunit methyltransferase H.